We begin with the raw amino-acid sequence, 175 residues long: Adenine phosphoribosyltransferase (175 aa).

Belongs to the purine/pyrimidine phosphoribosyltransferase family. Homodimer.

The protein localises to the cytoplasm. It catalyses the reaction AMP + diphosphate = 5-phospho-alpha-D-ribose 1-diphosphate + adenine. It functions in the pathway purine metabolism; AMP biosynthesis via salvage pathway; AMP from adenine: step 1/1. Catalyzes a salvage reaction resulting in the formation of AMP, that is energically less costly than de novo synthesis. The sequence is that of Adenine phosphoribosyltransferase from Maricaulis maris (strain MCS10) (Caulobacter maris).